A 213-amino-acid polypeptide reads, in one-letter code: Adenylate kinase (213 aa).

ATP is bound at residue 10–15; that stretch reads GAGKGT. The tract at residues 30-59 is NMP; that stretch reads STGDMFRAAMANQTEMGVLAKSYIDKGDLV. Residues Thr31, Arg36, 57 to 59, 86 to 89, and Gln93 each bind AMP; these read DLV and GYPR. Residues 127-160 are LID; sequence GRIINKKTGETFHKIFNPPVGDYKEEDFYQREDD. ATP is bound by residues Arg128 and 137-138; that span reads TF. The AMP site is built by Arg157 and Arg168. Lys196 provides a ligand contact to ATP.

The protein belongs to the adenylate kinase family. In terms of assembly, monomer.

The protein resides in the cytoplasm. The enzyme catalyses AMP + ATP = 2 ADP. It participates in purine metabolism; AMP biosynthesis via salvage pathway; AMP from ADP: step 1/1. Catalyzes the reversible transfer of the terminal phosphate group between ATP and AMP. Plays an important role in cellular energy homeostasis and in adenine nucleotide metabolism. This Streptococcus equi subsp. zooepidemicus (strain H70) protein is Adenylate kinase.